The following is a 448-amino-acid chain: SVP1-like protein 2 (448 aa).

Residues N61, N155, N256, N280, N315, and N421 are each glycosylated (N-linked (GlcNAc...) asparagine). 2 WD repeats span residues 222 to 262 and 267 to 306; these read AHKN…LIKE and VDKA…NTET. Residues 416–435 form a disordered region; the sequence is THYSLNESLRNEDTKSAGEP. Over residues 424 to 435 the composition is skewed to basic and acidic residues; the sequence is LRNEDTKSAGEP.

This sequence belongs to the WD repeat PROPPIN family. In terms of processing, N-glycosylated.

Its subcellular location is the endosome membrane. The protein resides in the prevacuolar compartment membrane. In terms of biological role, involved in piecemeal microautophagy of the nucleus (micronucleophagy). The chain is SVP1-like protein 2 (HSV2) from Saccharomyces cerevisiae (strain ATCC 204508 / S288c) (Baker's yeast).